The chain runs to 363 residues: 3-isopropylmalate dehydrogenase (363 aa).

An NAD(+)-binding site is contributed by 79–92; sequence GPKWEHLPPNDQPE. Positions 100, 110, 139, and 228 each coordinate substrate. Positions 228, 252, and 256 each coordinate Mg(2+). 286-298 lines the NAD(+) pocket; the sequence is GSAPDIAGKNIAN.

Belongs to the isocitrate and isopropylmalate dehydrogenases family. LeuB type 1 subfamily. As to quaternary structure, homodimer. Mg(2+) serves as cofactor. Requires Mn(2+) as cofactor.

The protein localises to the cytoplasm. It carries out the reaction (2R,3S)-3-isopropylmalate + NAD(+) = 4-methyl-2-oxopentanoate + CO2 + NADH. Its pathway is amino-acid biosynthesis; L-leucine biosynthesis; L-leucine from 3-methyl-2-oxobutanoate: step 3/4. Functionally, catalyzes the oxidation of 3-carboxy-2-hydroxy-4-methylpentanoate (3-isopropylmalate) to 3-carboxy-4-methyl-2-oxopentanoate. The product decarboxylates to 4-methyl-2 oxopentanoate. The sequence is that of 3-isopropylmalate dehydrogenase from Aliivibrio fischeri (strain ATCC 700601 / ES114) (Vibrio fischeri).